Reading from the N-terminus, the 533-residue chain is MERLKQLEEKRRQLKELRERRKQASLFPGSETMGHHPTEVHAKATMVSVSVQTDMEEGSKIQEPQSAYLRRKEVITYDKGIQTDQIEEEQLQENENHTTTDAVAIETTAADENNKDKAENDQPRLELAKPFLVEEAAATLSNASFARLETEVSASGQQAPSNMQQDKDNLMQWNMVSENLQSETDCDCIAQEYDPGKGVLVVVYLRLPPADLQYASSEAAWSVVNVVKCDNASGRNGLLIDMVEFRGTRIMTATILRRYHPESNVISILLATLTGKIILYELRLKQKKPETPVVYVVQRNMVARHYFQHPVVAVIETSSVQDQERVLVAADNGNIMELSCLDLTVLRKPQQLRPVPLSQLLSLENDTCTYTERLQRLAKFDEVGIACMAYTSEDPQYVWIGGEDGGIYKVFWDQPGPLYLSLDNNGFQPAENHSTRVTGLEFHWDDARRLMLLLSCSTDWTVRLWDARAGKAIIGAPLLLGGPVLRARWLEKNNGGENSRTLRCQVWCADGRLVVVNWAFDAKTSLYTATVIS.

Basic and acidic residues predominate over residues 1 to 19 (MERLKQLEEKRRQLKELRE). The disordered stretch occupies residues 1–36 (MERLKQLEEKRRQLKELRERRKQASLFPGSETMGHH). 2 WD repeats span residues 380-422 (FDEV…YLSL) and 432-475 (NHST…AIIG).

As to quaternary structure, interacts with NUM1, when DYN1 is present.

The protein localises to the cytoplasm. The protein resides in the cytoskeleton. Required for viability in the absence of the kinesin-related CIN8 mitotic motor. May be a dynein intermediate chain. The sequence is that of WD repeat-containing protein PAC11 (PAC11) from Saccharomyces cerevisiae (strain ATCC 204508 / S288c) (Baker's yeast).